The primary structure comprises 99 residues: Aspartyl/glutamyl-tRNA(Asn/Gln) amidotransferase subunit C (99 aa).

This sequence belongs to the GatC family. In terms of assembly, heterotrimer of A, B and C subunits.

It catalyses the reaction L-glutamyl-tRNA(Gln) + L-glutamine + ATP + H2O = L-glutaminyl-tRNA(Gln) + L-glutamate + ADP + phosphate + H(+). The enzyme catalyses L-aspartyl-tRNA(Asn) + L-glutamine + ATP + H2O = L-asparaginyl-tRNA(Asn) + L-glutamate + ADP + phosphate + 2 H(+). Functionally, allows the formation of correctly charged Asn-tRNA(Asn) or Gln-tRNA(Gln) through the transamidation of misacylated Asp-tRNA(Asn) or Glu-tRNA(Gln) in organisms which lack either or both of asparaginyl-tRNA or glutaminyl-tRNA synthetases. The reaction takes place in the presence of glutamine and ATP through an activated phospho-Asp-tRNA(Asn) or phospho-Glu-tRNA(Gln). This is Aspartyl/glutamyl-tRNA(Asn/Gln) amidotransferase subunit C from Methylibium petroleiphilum (strain ATCC BAA-1232 / LMG 22953 / PM1).